Here is a 736-residue protein sequence, read N- to C-terminus: Myosin-7 (736 aa).

In terms of domain architecture, Myosin motor spans 1–342 (NWMVTRINAT…LLGLLEEMRD (342 aa)). Residues 219–241 (LNKLMTNLRSTHPHFVRCIIPNE) are actin-binding. The IQ domain occupies 345–374 (LSRIITRIQAQSRGVLSRMEYKKLLERRDS). A coiled-coil region spans residues 403–736 (LLKSAETEKE…MNKKREAEFQ (334 aa)). Residue S701 is modified to Phosphoserine. The tract at residues 716–736 (EAGGATSVQIEMNKKREAEFQ) is disordered. Residues 727 to 736 (MNKKREAEFQ) show a composition bias toward basic and acidic residues.

The protein belongs to the TRAFAC class myosin-kinesin ATPase superfamily. Myosin family. In terms of assembly, muscle myosin is a hexameric protein that consists of 2 heavy chain subunits (MHC), 2 alkali light chain subunits (MLC) and 2 regulatory light chain subunits (MLC-2). Interacts with ECPAS. Interacts (via C-terminus) with LRRC39.

It is found in the cytoplasm. The protein localises to the myofibril. The protein resides in the sarcomere. In terms of biological role, myosins are actin-based motor molecules with ATPase activity essential for muscle contraction. Forms regular bipolar thick filaments that, together with actin thin filaments, constitute the fundamental contractile unit of skeletal and cardiac muscle. The sequence is that of Myosin-7 (MYH7) from Oryctolagus cuniculus (Rabbit).